A 69-amino-acid chain; its full sequence is DNA gyrase inhibitor YacG (69 aa).

Cys7, Cys10, Cys26, and Cys30 together coordinate Zn(2+).

It belongs to the DNA gyrase inhibitor YacG family. Interacts with GyrB. Requires Zn(2+) as cofactor.

Functionally, inhibits all the catalytic activities of DNA gyrase by preventing its interaction with DNA. Acts by binding directly to the C-terminal domain of GyrB, which probably disrupts DNA binding by the gyrase. The polypeptide is DNA gyrase inhibitor YacG (Shewanella baltica (strain OS155 / ATCC BAA-1091)).